A 188-amino-acid chain; its full sequence is ATP synthase subunit b (188 aa).

The chain crosses the membrane as a helical span at residues 30-50; that stretch reads IVWSLIPFLIILIVFWKLVLP.

It belongs to the ATPase B chain family. As to quaternary structure, F-type ATPases have 2 components, F(1) - the catalytic core - and F(0) - the membrane proton channel. F(1) has five subunits: alpha(3), beta(3), gamma(1), delta(1), epsilon(1). F(0) has three main subunits: a(1), b(2) and c(10-14). The alpha and beta chains form an alternating ring which encloses part of the gamma chain. F(1) is attached to F(0) by a central stalk formed by the gamma and epsilon chains, while a peripheral stalk is formed by the delta and b chains.

It is found in the cell membrane. Functionally, f(1)F(0) ATP synthase produces ATP from ADP in the presence of a proton or sodium gradient. F-type ATPases consist of two structural domains, F(1) containing the extramembraneous catalytic core and F(0) containing the membrane proton channel, linked together by a central stalk and a peripheral stalk. During catalysis, ATP synthesis in the catalytic domain of F(1) is coupled via a rotary mechanism of the central stalk subunits to proton translocation. Its function is as follows. Component of the F(0) channel, it forms part of the peripheral stalk, linking F(1) to F(0). The sequence is that of ATP synthase subunit b from Corynebacterium glutamicum (strain R).